The sequence spans 808 residues: Probable inorganic carbon transporter subunit DabA (808 aa).

Residues cysteine 335, aspartate 337, histidine 497, and cysteine 512 each coordinate Zn(2+).

This sequence belongs to the inorganic carbon transporter (TC 9.A.2) DabA family. Forms a complex with DabB. It depends on Zn(2+) as a cofactor.

The protein resides in the cell inner membrane. Its function is as follows. Part of an energy-coupled inorganic carbon pump. The protein is Probable inorganic carbon transporter subunit DabA of Rhodopseudomonas palustris (strain TIE-1).